Here is a 1066-residue protein sequence, read N- to C-terminus: FHIP family protein GI14169 (1066 aa).

Residues 1 to 11 are compositionally biased toward polar residues; sequence MSWLRTSPLRQ. The tract at residues 1–35 is disordered; it reads MSWLRTSPLRQSLTRSGSSSGNGSSGTATTMRQRP. Over residues 12 to 30 the composition is skewed to low complexity; that stretch reads SLTRSGSSSGNGSSGTATT. Ser500 is modified (phosphoserine). A disordered region spans residues 651–682; sequence GIDVTTTTTASASDTDLEHNNNSSSISSGRRD. Positions 655–678 are enriched in low complexity; it reads TTTTTASASDTDLEHNNNSSSISS. Ser820 carries the phosphoserine modification. 2 disordered regions span residues 821–913 and 935–1007; these read PLHQ…GNSA and SGGE…TGNF. The segment covering 822–855 has biased composition (low complexity); sequence LHQQLQHQQQHQQLAQTNSHTQQQQQQQQQQAQQ. The span at 856–874 shows a compositional bias: polar residues; that stretch reads RSTYATLSAATPVQASPTS. The segment covering 890 to 913 has biased composition (low complexity); the sequence is SRSITSMFSRRSTSSTPASNGNSA. Polar residues predominate over residues 947–971; that stretch reads QDSTRGNTCETSLSTAPRQEPQTNV. The segment covering 972 to 997 has biased composition (low complexity); sequence GSSSNSSIGSSTQTLSGTHSSSTLHG.

This sequence belongs to the FHIP family.

The protein is FHIP family protein GI14169 of Drosophila mojavensis (Fruit fly).